The primary structure comprises 71 residues: DNA-directed RNA polymerase subunit omega (71 aa).

It belongs to the RNA polymerase subunit omega family. In terms of assembly, the RNAP catalytic core consists of 2 alpha, 1 beta, 1 beta' and 1 omega subunit. When a sigma factor is associated with the core the holoenzyme is formed, which can initiate transcription.

The enzyme catalyses RNA(n) + a ribonucleoside 5'-triphosphate = RNA(n+1) + diphosphate. Its function is as follows. Promotes RNA polymerase assembly. Latches the N- and C-terminal regions of the beta' subunit thereby facilitating its interaction with the beta and alpha subunits. The protein is DNA-directed RNA polymerase subunit omega of Aromatoleum aromaticum (strain DSM 19018 / LMG 30748 / EbN1) (Azoarcus sp. (strain EbN1)).